We begin with the raw amino-acid sequence, 355 residues long: Protein RecA (355 aa).

67-74 (GPESSGKT) contacts ATP.

It belongs to the RecA family.

The protein localises to the cytoplasm. Its function is as follows. Can catalyze the hydrolysis of ATP in the presence of single-stranded DNA, the ATP-dependent uptake of single-stranded DNA by duplex DNA, and the ATP-dependent hybridization of homologous single-stranded DNAs. It interacts with LexA causing its activation and leading to its autocatalytic cleavage. The sequence is that of Protein RecA from Shewanella baltica (strain OS223).